A 380-amino-acid polypeptide reads, in one-letter code: Cytochrome b (380 aa).

Transmembrane regions (helical) follow at residues 33 to 53 (FGSL…FLAM), 77 to 98 (WLLR…YLHI), 113 to 133 (WNIG…GYVL), and 178 to 198 (FFTF…LHLL). Residues His83 and His97 each contribute to the heme b site. Heme b is bound by residues His182 and His196. His201 contacts a ubiquinone. 4 consecutive transmembrane segments (helical) span residues 226–246 (YKDL…ALLN), 288–308 (LGGV…PVLH), 320–340 (PSQT…WIGG), and 347–367 (FIII…ILIP).

This sequence belongs to the cytochrome b family. The cytochrome bc1 complex contains 3 respiratory subunits (MT-CYB, CYC1 and UQCRFS1), 2 core proteins (UQCRC1 and UQCRC2) and probably 6 low-molecular weight proteins. Heme b is required as a cofactor.

The protein resides in the mitochondrion inner membrane. Functionally, component of the ubiquinol-cytochrome c reductase complex (complex III or cytochrome b-c1 complex) that is part of the mitochondrial respiratory chain. The b-c1 complex mediates electron transfer from ubiquinol to cytochrome c. Contributes to the generation of a proton gradient across the mitochondrial membrane that is then used for ATP synthesis. In Atractosteus spatula (Alligator gar), this protein is Cytochrome b (mt-cyb).